A 168-amino-acid chain; its full sequence is Thiol peroxidase (168 aa).

Residues 19–168 (PQAGSKAQTF…YEAALAVLKA (150 aa)) enclose the Thioredoxin domain. Cysteine 61 functions as the Cysteine sulfenic acid (-SOH) intermediate in the catalytic mechanism. Residues cysteine 61 and cysteine 95 are joined by a disulfide bond.

Belongs to the peroxiredoxin family. Tpx subfamily. Homodimer.

The catalysed reaction is a hydroperoxide + [thioredoxin]-dithiol = an alcohol + [thioredoxin]-disulfide + H2O. Functionally, thiol-specific peroxidase that catalyzes the reduction of hydrogen peroxide and organic hydroperoxides to water and alcohols, respectively. Plays a role in cell protection against oxidative stress by detoxifying peroxides. This chain is Thiol peroxidase, found in Shigella dysenteriae.